The sequence spans 182 residues: Biotin transporter BioY2 (182 aa).

Helical transmembrane passes span 12 to 32 (IALG…IGIV), 54 to 74 (FFAI…FTGG), 78 to 98 (IAVL…MGTL), 111 to 131 (IPAF…GTLW), and 150 to 170 (PFVF…LALI).

It belongs to the BioY family. As to quaternary structure, in E.coli forms a stable energy-coupling factor (ECF) transporter complex composed of 2 membrane-embedded substrate-binding protein (S component), 2 ATP-binding proteins (A and A' components) and 2 transmembrane proteins (T component), probably with a stoichiometry of 2:1:1:2. May be able to interact with more than 1 S component at a time.

It localises to the cell membrane. In terms of biological role, probably a biotin-binding protein that interacts with the energy-coupling factor (ECF) ABC-transporter complex. Unlike classic ABC transporters this ECF transporter provides the energy necessary to transport a number of different substrates. The substrates themselves are bound by transmembrane, not extracytoplasmic soluble proteins. This Lactococcus lactis subsp. cremoris (strain MG1363) protein is Biotin transporter BioY2 (bioY2).